The primary structure comprises 77 residues: U8-lycotoxin-Ls1m (77 aa).

An N-terminal signal peptide occupies residues 1–20; it reads MKLMIFTGLVLFAIVRLIEA. Residues 21 to 26 constitute a propeptide that is removed on maturation; that stretch reads QAENEK.

The protein belongs to the neurotoxin 19 (CSTX) family. 08 (U8-Lctx) subfamily. In terms of processing, contains 4 disulfide bonds. In terms of tissue distribution, expressed by the venom gland.

Its subcellular location is the secreted. This chain is U8-lycotoxin-Ls1m, found in Lycosa singoriensis (Wolf spider).